A 485-amino-acid polypeptide reads, in one-letter code: Glutamate--tRNA ligase (485 aa).

The short motif at 11-21 is the 'HIGH' region element; that stretch reads PSPTGHLHIGN. Residues 252 to 256 carry the 'KMSKS' region motif; that stretch reads KLSKR. An ATP-binding site is contributed by lysine 255.

The protein belongs to the class-I aminoacyl-tRNA synthetase family. Glutamate--tRNA ligase type 1 subfamily. In terms of assembly, monomer.

Its subcellular location is the cytoplasm. The enzyme catalyses tRNA(Glu) + L-glutamate + ATP = L-glutamyl-tRNA(Glu) + AMP + diphosphate. Catalyzes the attachment of glutamate to tRNA(Glu) in a two-step reaction: glutamate is first activated by ATP to form Glu-AMP and then transferred to the acceptor end of tRNA(Glu). The protein is Glutamate--tRNA ligase of Bacillus mycoides (strain KBAB4) (Bacillus weihenstephanensis).